The chain runs to 608 residues: Cilia- and flagella-associated protein 100 (608 aa).

Over residues methionine 1 to lysine 17 the composition is skewed to polar residues. The tract at residues methionine 1 to serine 57 is disordered. Over residues leucine 20–glutamate 32 the composition is skewed to low complexity. Coiled coils occupy residues threonine 164–aspartate 196 and leucine 230–lysine 257. Disordered stretches follow at residues alanine 291–glycine 320 and leucine 339–proline 377. Positions leucine 339–serine 361 are enriched in low complexity. Coiled-coil stretches lie at residues glutamine 385–glutamine 435 and threonine 500–threonine 575.

Belongs to the CFAP100 family.

The protein localises to the cytoplasm. It is found in the cytoskeleton. Its subcellular location is the cilium axoneme. Its function is as follows. May play a role in ciliary/flagellar motility by regulating the assembly and the activity of axonemal inner dynein arm. The polypeptide is Cilia- and flagella-associated protein 100 (Macaca fascicularis (Crab-eating macaque)).